Consider the following 116-residue polypeptide: MNLITTIITITITLSAVLATISFWLPQISPDAEKLSPYECGFDPLGSARLPFSLRFFLIAILFLLFDLEIALLLPLPWGDQLNTPTLTLIWSTAVLALLTLGLIYEWTQGGLEWAE.

3 helical membrane passes run 3 to 23, 56 to 76, and 87 to 107; these read LITT…TISF, FFLI…LLPL, and LTLI…IYEW.

The protein belongs to the complex I subunit 3 family.

The protein resides in the mitochondrion membrane. The enzyme catalyses a ubiquinone + NADH + 5 H(+)(in) = a ubiquinol + NAD(+) + 4 H(+)(out). Core subunit of the mitochondrial membrane respiratory chain NADH dehydrogenase (Complex I) that is believed to belong to the minimal assembly required for catalysis. Complex I functions in the transfer of electrons from NADH to the respiratory chain. The immediate electron acceptor for the enzyme is believed to be ubiquinone. In Oncorhynchus gorbuscha (Pink salmon), this protein is NADH-ubiquinone oxidoreductase chain 3 (MT-ND3).